The sequence spans 359 residues: UDP-N-acetylglucosamine--N-acetylmuramyl-(pentapeptide) pyrophosphoryl-undecaprenol N-acetylglucosamine transferase (359 aa).

Residues 15–17 (SGG), Asn-127, Arg-164, Ser-192, Ile-246, 265–270 (ALTVSE), and Gln-290 contribute to the UDP-N-acetyl-alpha-D-glucosamine site.

The protein belongs to the glycosyltransferase 28 family. MurG subfamily.

It is found in the cell membrane. The catalysed reaction is di-trans,octa-cis-undecaprenyl diphospho-N-acetyl-alpha-D-muramoyl-L-alanyl-D-glutamyl-meso-2,6-diaminopimeloyl-D-alanyl-D-alanine + UDP-N-acetyl-alpha-D-glucosamine = di-trans,octa-cis-undecaprenyl diphospho-[N-acetyl-alpha-D-glucosaminyl-(1-&gt;4)]-N-acetyl-alpha-D-muramoyl-L-alanyl-D-glutamyl-meso-2,6-diaminopimeloyl-D-alanyl-D-alanine + UDP + H(+). Its pathway is cell wall biogenesis; peptidoglycan biosynthesis. Cell wall formation. Catalyzes the transfer of a GlcNAc subunit on undecaprenyl-pyrophosphoryl-MurNAc-pentapeptide (lipid intermediate I) to form undecaprenyl-pyrophosphoryl-MurNAc-(pentapeptide)GlcNAc (lipid intermediate II). The polypeptide is UDP-N-acetylglucosamine--N-acetylmuramyl-(pentapeptide) pyrophosphoryl-undecaprenol N-acetylglucosamine transferase (Wigglesworthia glossinidia brevipalpis).